A 274-amino-acid chain; its full sequence is S-adenosylmethionine-dependent nucleotide dehydratase (274 aa).

A Radical SAM core domain is found at 1–215 (MAYKVNLHIT…VERHAEVSHD (215 aa)). Residues C13, C17, and C20 each coordinate [4Fe-4S] cluster.

It belongs to the radical SAM superfamily. Prokaryotic viperin family. It depends on [4Fe-4S] cluster as a cofactor.

The enzyme catalyses CTP + AH2 + S-adenosyl-L-methionine = 3'-deoxy-3',4'-didehydro-CTP + 5'-deoxyadenosine + L-methionine + A + H2O + H(+). Its function is as follows. Expression of pVip6 in E.coli (strain MG1655) confers resistance to phages lambda, P1, SECphi6, SECphi8 and T7. Catalyzes the conversion of cytidine triphosphate (CTP) to 3'-deoxy-3',4'-didehydro-CTP (ddhCTP), probably via a SAM-dependent radical mechanism. The modified nucleotide represses transcription from T7 RNA polymerase-directed genes (possibly by acting as chain terminators), strongly suggesting these nucleotides block viral polymerase transcription. In Selenomonas ruminantium, this protein is S-adenosylmethionine-dependent nucleotide dehydratase.